The sequence spans 552 residues: Low-affinity Fe(2+) transport protein (552 aa).

The Extracellular segment spans residues 1-97 (MGKIAEFLGN…DFLVRVAGSQ (97 aa)). A Glycyl lysine isopeptide (Lys-Gly) (interchain with G-Cter in ubiquitin) cross-link involves residue K39. S48 and S50 each carry phosphoserine. A helical transmembrane segment spans residues 98–118 (AVFFIVWIILIIWVVIGIVYN). The Cytoplasmic segment spans residues 119 to 225 (APFNWQVVMQ…SNVASRYMGS (107 aa)). The helical transmembrane segment at 226-246 (IAAMVIFWIGIFVWIGCGAIP) threads the bilayer. Over 247–271 (KDAGNTPPYTGETTGSNPRLKKFSD) the chain is Extracellular. A helical membrane pass occupies residues 272 to 292 (AWQMYINTAVAVSLLICTTFL). The Cytoplasmic portion of the chain corresponds to 293–354 (QNIRARHDYF…GRKMIDWYAD (62 aa)). The helical transmembrane segment at 355–375 (IIGTGIGVLIGVAVFATWIGI) threads the bilayer. The Extracellular portion of the chain corresponds to 376 to 383 (GSPMKWDD). A helical transmembrane segment spans residues 384–404 (NWWLIIGTYTGLIGFLDGFVL). Topologically, residues 405 to 465 (REVYFRIVQH…SQYINRICST (61 aa)) are cytoplasmic. A helical membrane pass occupies residues 466-486 (PWSVLVSVIIIIGLICIASGL). Topologically, residues 487-493 (RWSTTGQ) are extracellular. A helical transmembrane segment spans residues 494–514 (LIANTPTMIIEEFFLLVLLQA). Residues 515–552 (HNWADRQRRVEVTALYARRRILLSYVEKRFPEVMMLEK) lie on the Cytoplasmic side of the membrane.

The protein belongs to the FET4 family.

The protein resides in the membrane. Its function is as follows. Required for Fe(2+) ion low affinity uptake. This chain is Low-affinity Fe(2+) transport protein (FET4), found in Saccharomyces cerevisiae (strain ATCC 204508 / S288c) (Baker's yeast).